The chain runs to 308 residues: Phosphoribosylaminoimidazole-succinocarboxamide synthase (308 aa).

This sequence belongs to the SAICAR synthetase family.

It catalyses the reaction 5-amino-1-(5-phospho-D-ribosyl)imidazole-4-carboxylate + L-aspartate + ATP = (2S)-2-[5-amino-1-(5-phospho-beta-D-ribosyl)imidazole-4-carboxamido]succinate + ADP + phosphate + 2 H(+). The protein operates within purine metabolism; IMP biosynthesis via de novo pathway; 5-amino-1-(5-phospho-D-ribosyl)imidazole-4-carboxamide from 5-amino-1-(5-phospho-D-ribosyl)imidazole-4-carboxylate: step 1/2. The protein is Phosphoribosylaminoimidazole-succinocarboxamide synthase of Xanthomonas euvesicatoria pv. vesicatoria (strain 85-10) (Xanthomonas campestris pv. vesicatoria).